The sequence spans 327 residues: Gonadotropin-releasing hormone receptor (327 aa).

Over 1–38 (MANNASLEQDPNHCSAINNSIPLIQGKLPTLTVSGKIR) the chain is Extracellular. N-linked (GlcNAc...) asparagine glycosylation is found at Asn-4 and Asn-18. A helical membrane pass occupies residues 39 to 58 (VTVTFFLFLLSTAFNASFLL). The Cytoplasmic portion of the chain corresponds to 59-77 (KLQKWTQKRKKGKKLSRMK). A helical transmembrane segment spans residues 78 to 97 (VLLKHLTLANLLETLIVMPL). The Extracellular portion of the chain corresponds to 98–115 (DGMWNITVQWYAGEFLCK). The N-linked (GlcNAc...) asparagine glycan is linked to Asn-102. Cys-114 and Cys-195 are joined by a disulfide. Residues 116–137 (VLSYLKLFSMYAPAFMMVVISL) traverse the membrane as a helical segment. Residues 138–164 (DRSLAITQPLAVQSNSKLEQSMISLAW) lie on the Cytoplasmic side of the membrane. Residues 165–184 (ILSIVFAGPQLYIFRMIYLA) traverse the membrane as a helical segment. Residues 185–211 (DGSGPTVFSQCVTHCSFPQWWHQAFYN) lie on the Extracellular side of the membrane. The helical transmembrane segment at 212-231 (FFTFGCLFIIPLLIMLICNA) threads the bilayer. Over 232–280 (KIIFALTRVLHQDPRKLQLNQSKNNIPRARLRTLKMTVAFATSFVVCWT) the chain is Cytoplasmic. A helical membrane pass occupies residues 281 to 299 (PYYVLGIWYWFDPEMLNRV). The Extracellular segment spans residues 300 to 305 (SEPVNH). Residues 306–325 (FFFLFAFLNPCFDPLIYGYF) traverse the membrane as a helical segment. Residues 326–327 (SL) are Cytoplasmic-facing.

It belongs to the G-protein coupled receptor 1 family. As to expression, pituitary gland.

It is found in the cell membrane. Receptor for gonadotropin releasing hormone (GnRH) that mediates the action of GnRH to stimulate the secretion of the gonadotropic hormones luteinizing hormone (LH) and follicle-stimulating hormone (FSH). This receptor mediates its action by association with G-proteins that activate a phosphatidylinositol-calcium second messenger system. This chain is Gonadotropin-releasing hormone receptor (Gnrhr), found in Mus musculus (Mouse).